Consider the following 252-residue polypeptide: 5'-nucleotidase SurE (252 aa).

The a divalent metal cation site is built by Asp8, Asp9, Ser39, and Asn91.

This sequence belongs to the SurE nucleotidase family. A divalent metal cation serves as cofactor.

The protein resides in the cytoplasm. The catalysed reaction is a ribonucleoside 5'-phosphate + H2O = a ribonucleoside + phosphate. Its function is as follows. Nucleotidase that shows phosphatase activity on nucleoside 5'-monophosphates. This Geobacter metallireducens (strain ATCC 53774 / DSM 7210 / GS-15) protein is 5'-nucleotidase SurE.